We begin with the raw amino-acid sequence, 123 residues long: Small ribosomal subunit protein uS12 (123 aa).

Asp-89 bears the 3-methylthioaspartic acid mark. The disordered stretch occupies residues 104–123; the sequence is TAGVKDRKQARSKYGAKRPK. The span at 113 to 123 shows a compositional bias: basic residues; sequence ARSKYGAKRPK.

This sequence belongs to the universal ribosomal protein uS12 family. As to quaternary structure, part of the 30S ribosomal subunit. Contacts proteins S8 and S17. May interact with IF1 in the 30S initiation complex.

With S4 and S5 plays an important role in translational accuracy. Its function is as follows. Interacts with and stabilizes bases of the 16S rRNA that are involved in tRNA selection in the A site and with the mRNA backbone. Located at the interface of the 30S and 50S subunits, it traverses the body of the 30S subunit contacting proteins on the other side and probably holding the rRNA structure together. The combined cluster of proteins S8, S12 and S17 appears to hold together the shoulder and platform of the 30S subunit. The chain is Small ribosomal subunit protein uS12 from Neisseria meningitidis serogroup C (strain 053442).